Consider the following 218-residue polypeptide: Large ribosomal subunit protein uL3 (218 aa).

The protein belongs to the universal ribosomal protein uL3 family. As to quaternary structure, part of the 50S ribosomal subunit. Forms a cluster with proteins L14 and L19.

Its function is as follows. One of the primary rRNA binding proteins, it binds directly near the 3'-end of the 23S rRNA, where it nucleates assembly of the 50S subunit. This chain is Large ribosomal subunit protein uL3, found in Corynebacterium jeikeium (strain K411).